We begin with the raw amino-acid sequence, 206 residues long: dCTP deaminase, dUMP-forming (206 aa).

DCTP contacts are provided by residues 117–122 (RSSFGR), D135, 143–145 (TLE), Q163, Y177, K184, and Q188. The Proton donor/acceptor role is filled by E145.

Belongs to the dCTP deaminase family. Homotrimer.

The enzyme catalyses dCTP + 2 H2O = dUMP + NH4(+) + diphosphate. Its pathway is pyrimidine metabolism; dUMP biosynthesis; dUMP from dCTP: step 1/1. In terms of biological role, bifunctional enzyme that catalyzes both the deamination of dCTP to dUTP and the hydrolysis of dUTP to dUMP without releasing the toxic dUTP intermediate. This is dCTP deaminase, dUMP-forming from Methanococcus maripaludis (strain C6 / ATCC BAA-1332).